The following is an 86-amino-acid chain: MANIKSAIKRVKTAEKRRVANVQRKSSMRSAIKAVETFATEGNKEQALVAFNTASKKIDKAAAKGLIHSNKAGRDKSRLARLVNAL.

It belongs to the bacterial ribosomal protein bS20 family.

Binds directly to 16S ribosomal RNA. In Exiguobacterium sibiricum (strain DSM 17290 / CCUG 55495 / CIP 109462 / JCM 13490 / 255-15), this protein is Small ribosomal subunit protein bS20.